Consider the following 208-residue polypeptide: Protein GrpE (208 aa).

The span at 1-12 (MTNKDESVEKNT) shows a compositional bias: basic and acidic residues. The tract at residues 1 to 49 (MTNKDESVEKNTESTVEVTNVKQNIDDSVEQTEESKGHLQDEAIEETSD) is disordered. The span at 13 to 23 (ESTVEVTNVKQ) shows a compositional bias: polar residues.

This sequence belongs to the GrpE family. In terms of assembly, homodimer.

Its subcellular location is the cytoplasm. Its function is as follows. Participates actively in the response to hyperosmotic and heat shock by preventing the aggregation of stress-denatured proteins, in association with DnaK and GrpE. It is the nucleotide exchange factor for DnaK and may function as a thermosensor. Unfolded proteins bind initially to DnaJ; upon interaction with the DnaJ-bound protein, DnaK hydrolyzes its bound ATP, resulting in the formation of a stable complex. GrpE releases ADP from DnaK; ATP binding to DnaK triggers the release of the substrate protein, thus completing the reaction cycle. Several rounds of ATP-dependent interactions between DnaJ, DnaK and GrpE are required for fully efficient folding. The protein is Protein GrpE of Staphylococcus aureus (strain bovine RF122 / ET3-1).